The following is a 344-amino-acid chain: Eukaryotic translation initiation factor 2 subunit alpha homolog (344 aa).

One can recognise an S1 motif domain in the interval 21–92 (DMAVMIQVKN…EKGYIDLSKR (72 aa)). At Ser-56 the chain carries Phosphoserine; by GCN2. The disordered stretch occupies residues 312–344 (DNEEMSGDEDSGDEEEDTGMGEVDLDAGAGIIE). Acidic residues predominate over residues 314 to 336 (EEMSGDEDSGDEEEDTGMGEVDL).

Belongs to the eIF-2-alpha family. Heterotrimer composed of an alpha, a beta and a gamma chain. Phosphorylated at Ser-56 by GCN2.

Functionally, functions in the early steps of protein synthesis by forming a ternary complex with GTP and initiator tRNA. This complex binds to a 40S ribosomal subunit, followed by mRNA binding to form a 43S pre-initiation complex. Junction of the 60S ribosomal subunit to form the 80S initiation complex is preceded by hydrolysis of the GTP bound to eIF-2 and release of an eIF-2-GDP binary complex. In order for eIF-2 to recycle and catalyze another round of initiation, the GDP bound to eIF-2 must exchange with GTP by way of a reaction catalyzed by eIF-2B. This chain is Eukaryotic translation initiation factor 2 subunit alpha homolog, found in Arabidopsis thaliana (Mouse-ear cress).